Reading from the N-terminus, the 452-residue chain is Pup--protein ligase (452 aa).

Residue E9 participates in Mg(2+) binding. An ATP-binding site is contributed by R53. Position 55 (Y55) interacts with Mg(2+). D57 acts as the Proton acceptor in catalysis. Position 63 (E63) interacts with Mg(2+). Residues T66 and W419 each coordinate ATP.

It belongs to the Pup ligase/Pup deamidase family. Pup-conjugating enzyme subfamily.

The enzyme catalyses ATP + [prokaryotic ubiquitin-like protein]-L-glutamate + [protein]-L-lysine = ADP + phosphate + N(6)-([prokaryotic ubiquitin-like protein]-gamma-L-glutamyl)-[protein]-L-lysine.. The protein operates within protein degradation; proteasomal Pup-dependent pathway. It participates in protein modification; protein pupylation. Catalyzes the covalent attachment of the prokaryotic ubiquitin-like protein modifier Pup to the proteasomal substrate proteins, thereby targeting them for proteasomal degradation. This tagging system is termed pupylation. The ligation reaction involves the side-chain carboxylate of the C-terminal glutamate of Pup and the side-chain amino group of a substrate lysine. This Salinispora arenicola (strain CNS-205) protein is Pup--protein ligase.